The chain runs to 393 residues: BEN domain-containing protein 5 (393 aa).

A coiled-coil region spans residues 169–212; the sequence is RVLYEELLRSYQQQQQEMKHIQHELERTRKQLVQQAKKLKDYGS. Residues 274–380 form the BEN domain; it reads GSGVWVNEEK…EKIMDINKSC (107 aa).

In terms of biological role, may act as a transcriptional repressor. This chain is BEN domain-containing protein 5 (bend5), found in Xenopus laevis (African clawed frog).